The sequence spans 39 residues: MELLAALNLEPIFQLTFVGLIMVAGPVVIFLLAFRGGDL.

The helical transmembrane segment at 12 to 32 threads the bilayer; it reads IFQLTFVGLIMVAGPVVIFLL.

It belongs to the Psb30/Ycf12 family. In terms of assembly, PSII is composed of 1 copy each of membrane proteins PsbA, PsbB, PsbC, PsbD, PsbE, PsbF, PsbH, PsbI, PsbJ, PsbK, PsbL, PsbM, PsbT, PsbX, PsbY, PsbZ, Psb30/Ycf12, peripheral proteins PsbO, CyanoQ (PsbQ), PsbU, PsbV and a large number of cofactors. It forms dimeric complexes.

It is found in the cellular thylakoid membrane. In terms of biological role, a core subunit of photosystem II (PSII), probably helps stabilize the reaction center. The protein is Photosystem II reaction center protein Psb30 of Rippkaea orientalis (strain PCC 8801 / RF-1) (Cyanothece sp. (strain PCC 8801)).